Here is a 431-residue protein sequence, read N- to C-terminus: Gamma-glutamyl phosphate reductase (431 aa).

It belongs to the gamma-glutamyl phosphate reductase family.

It localises to the cytoplasm. It carries out the reaction L-glutamate 5-semialdehyde + phosphate + NADP(+) = L-glutamyl 5-phosphate + NADPH + H(+). The protein operates within amino-acid biosynthesis; L-proline biosynthesis; L-glutamate 5-semialdehyde from L-glutamate: step 2/2. Catalyzes the NADPH-dependent reduction of L-glutamate 5-phosphate into L-glutamate 5-semialdehyde and phosphate. The product spontaneously undergoes cyclization to form 1-pyrroline-5-carboxylate. This is Gamma-glutamyl phosphate reductase from Trichodesmium erythraeum (strain IMS101).